The chain runs to 300 residues: Ribosomal protein bS6--L-glutamate ligase (300 aa).

The ATP-grasp domain occupies 104-287 (MQLLARQGID…IAGKMIRWIE (184 aa)). Residues Lys-141, 178 to 179 (EY), Asp-187, and 211 to 213 (RSN) contribute to the ATP site. Mg(2+) is bound by residues Asp-248, Glu-260, and Asn-262. The Mn(2+) site is built by Asp-248, Glu-260, and Asn-262.

The protein belongs to the RimK family. The cofactor is Mg(2+). Mn(2+) serves as cofactor.

Its function is as follows. An L-glutamate ligase that catalyzes the ATP-dependent post-translational addition of glutamate residues to the C-terminus of ribosomal protein bS6 (RpsF). Is also able to catalyze the synthesis of poly-alpha-glutamate in vitro, via ATP hydrolysis from unprotected glutamate as substrate. The number of glutamate residues added to either RpsF or to poly-alpha-glutamate changes with pH. The protein is Ribosomal protein bS6--L-glutamate ligase of Shigella boydii serotype 18 (strain CDC 3083-94 / BS512).